The following is a 126-amino-acid chain: Regulatory protein MgsR (126 aa).

The cysteines at positions 13 and 16 are disulfide-linked.

It belongs to the ArsC family.

It is found in the cytoplasm. With respect to regulation, activity is controlled at multiple levels. Regulation includes a positive autoregulatory loop on mgsR transcription and a post-translational redox-sensitive activation step by an intramolecular disulfide bond formation in response to ethanol stress. In addition, protein stability is strictly controlled by rapid proteolytic degradation by the ClpXP and ClpCP proteases. The McsB protein-arginine kinase might serve as a proteolytic adapter for the ClpX ATPase in the degradation mechanism of MgsR. Regulates transcription of a subregulon within the general stress response. Exerts positive and negative effects in response to ethanol stress. This Bacillus subtilis (strain 168) protein is Regulatory protein MgsR.